A 141-amino-acid polypeptide reads, in one-letter code: Hemoglobin subunit alpha (141 aa).

The Globin domain maps to 1-141 (VLSSADKNNI…VSTVLTSKYR (141 aa)). The residue at position 3 (S3) is a Phosphoserine. An N6-succinyllysine mark is found at K7 and K11. K16 is modified (N6-acetyllysine; alternate). K16 carries the N6-succinyllysine; alternate modification. Y24 is modified (phosphotyrosine). S35 carries the post-translational modification Phosphoserine. The residue at position 40 (K40) is an N6-succinyllysine. A Phosphoserine modification is found at S49. An O2-binding site is contributed by H58. Residue H87 participates in heme b binding. S102 carries the post-translational modification Phosphoserine. Residues T108, T134, and T137 each carry the phosphothreonine modification. At S138 the chain carries Phosphoserine.

It belongs to the globin family. In terms of assembly, heterotetramer of two alpha chains and two beta chains. As to expression, red blood cells.

Functionally, involved in oxygen transport from the lung to the various peripheral tissues. In terms of biological role, hemopressin acts as an antagonist peptide of the cannabinoid receptor CNR1. Hemopressin-binding efficiently blocks cannabinoid receptor CNR1 and subsequent signaling. The chain is Hemoglobin subunit alpha (HBA) from Paguma larvata (Masked palm civet).